Consider the following 351-residue polypeptide: Thiamine-phosphate synthase (351 aa).

Residues 1 to 129 (MVEPYSQKEQ…AKACKQMRYQ (129 aa)) form a unknown region. Positions 65–85 (LRAARDTPGDPGTELTHPQEE) are disordered. The segment at 130–351 (VYTLESNLMG…SQLNRIKPEL (222 aa)) is thiamine-phosphate synthase. 4-amino-2-methyl-5-(diphosphooxymethyl)pyrimidine-binding positions include 177–181 (QYRDK) and Asn209. Mg(2+) contacts are provided by Asp210 and Asp229. Ser248 contributes to the 4-amino-2-methyl-5-(diphosphooxymethyl)pyrimidine binding site. 274–276 (TPT) contacts 2-[(2R,5Z)-2-carboxy-4-methylthiazol-5(2H)-ylidene]ethyl phosphate. Lys277 lines the 4-amino-2-methyl-5-(diphosphooxymethyl)pyrimidine pocket. Residue Gly304 coordinates 2-[(2R,5Z)-2-carboxy-4-methylthiazol-5(2H)-ylidene]ethyl phosphate.

It belongs to the thiamine-phosphate synthase family. Mg(2+) serves as cofactor.

The catalysed reaction is 2-[(2R,5Z)-2-carboxy-4-methylthiazol-5(2H)-ylidene]ethyl phosphate + 4-amino-2-methyl-5-(diphosphooxymethyl)pyrimidine + 2 H(+) = thiamine phosphate + CO2 + diphosphate. It carries out the reaction 2-(2-carboxy-4-methylthiazol-5-yl)ethyl phosphate + 4-amino-2-methyl-5-(diphosphooxymethyl)pyrimidine + 2 H(+) = thiamine phosphate + CO2 + diphosphate. The enzyme catalyses 4-methyl-5-(2-phosphooxyethyl)-thiazole + 4-amino-2-methyl-5-(diphosphooxymethyl)pyrimidine + H(+) = thiamine phosphate + diphosphate. It functions in the pathway cofactor biosynthesis; thiamine diphosphate biosynthesis; thiamine phosphate from 4-amino-2-methyl-5-diphosphomethylpyrimidine and 4-methyl-5-(2-phosphoethyl)-thiazole: step 1/1. Functionally, condenses 4-methyl-5-(beta-hydroxyethyl)thiazole monophosphate (THZ-P) and 2-methyl-4-amino-5-hydroxymethyl pyrimidine pyrophosphate (HMP-PP) to form thiamine monophosphate (TMP). This Nostoc punctiforme (strain ATCC 29133 / PCC 73102) protein is Thiamine-phosphate synthase.